A 292-amino-acid chain; its full sequence is tRNA (guanine-N(7)-)-methyltransferase (292 aa).

The disordered stretch occupies residues 1–52 (MGKIEATSKEEKLRVQKEAEARRRAYRDLKKEARQMQKEVKFDTDDNSELPK). Residues G106, 129-130 (EI), 166-167 (NA), and C186 each bind S-adenosyl-L-methionine. D189 is an active-site residue. 264-266 (TEE) contacts S-adenosyl-L-methionine.

The protein belongs to the class I-like SAM-binding methyltransferase superfamily. TrmB family. Forms a complex with TRM82.

It is found in the nucleus. The enzyme catalyses guanosine(46) in tRNA + S-adenosyl-L-methionine = N(7)-methylguanosine(46) in tRNA + S-adenosyl-L-homocysteine. It participates in tRNA modification; N(7)-methylguanine-tRNA biosynthesis. Its function is as follows. Catalyzes the formation of N(7)-methylguanine at position 46 (m7G46) in tRNA. The chain is tRNA (guanine-N(7)-)-methyltransferase from Debaryomyces hansenii (strain ATCC 36239 / CBS 767 / BCRC 21394 / JCM 1990 / NBRC 0083 / IGC 2968) (Yeast).